The chain runs to 288 residues: MILEGKTLAAAIRENLPARAQICKTKLGRPLKLTGIGWAADYASYVYLDKEIKAAEKTGITGEVIDITEQTSHEEMLNIIKKLSTDETVDAVIVPKPLPRHLNTLEIWEALNPLKDIDGSSVLNMGRLFMCKNWAEVEAMQGFAPATAMAVIKLLDFYKIKLSGVETGVLGRSATVGKPLAHMLSCKDATVKICHSKTPSLTSSLSQCDIVISAIGKAKFVTENMVKTGAMVIDVGTNQDENGVFCGDVDFENVKKITSAITPVPGGVGPVTLACLLENIIISGERKL.

NADP(+)-binding positions include 171–173 (GRS), Ser196, and Thr237.

The protein belongs to the tetrahydrofolate dehydrogenase/cyclohydrolase family. As to quaternary structure, homodimer.

It carries out the reaction (6R)-5,10-methylene-5,6,7,8-tetrahydrofolate + NADP(+) = (6R)-5,10-methenyltetrahydrofolate + NADPH. The enzyme catalyses (6R)-5,10-methenyltetrahydrofolate + H2O = (6R)-10-formyltetrahydrofolate + H(+). Its pathway is one-carbon metabolism; tetrahydrofolate interconversion. Catalyzes the oxidation of 5,10-methylenetetrahydrofolate to 5,10-methenyltetrahydrofolate and then the hydrolysis of 5,10-methenyltetrahydrofolate to 10-formyltetrahydrofolate. The polypeptide is Bifunctional protein FolD (Elusimicrobium minutum (strain Pei191)).